Here is a 1257-residue protein sequence, read N- to C-terminus: Elongation factor 2 (1257 aa).

A DOD-type homing endonuclease domain is found at Leu273–Val402. The tr-type G domain maps to Val541–Val782. GTP is bound by residues Asp616 to His620 and Asn670 to Asp673. Diphthamide is present on His1120. Residues Glu1237–Asp1250 show a composition bias toward basic and acidic residues. The disordered stretch occupies residues Glu1237 to Gly1257.

This sequence belongs to the TRAFAC class translation factor GTPase superfamily. Classic translation factor GTPase family. EF-G/EF-2 subfamily. Post-translationally, this protein undergoes a protein self splicing that involves a post-translational excision of the intervening region (intein) followed by peptide ligation.

It is found in the cytoplasm. Catalyzes the GTP-dependent ribosomal translocation step during translation elongation. During this step, the ribosome changes from the pre-translocational (PRE) to the post-translocational (POST) state as the newly formed A-site-bound peptidyl-tRNA and P-site-bound deacylated tRNA move to the P and E sites, respectively. Catalyzes the coordinated movement of the two tRNA molecules, the mRNA and conformational changes in the ribosome. The polypeptide is Elongation factor 2 (Methanopyrus kandleri (strain AV19 / DSM 6324 / JCM 9639 / NBRC 100938)).